An 836-amino-acid polypeptide reads, in one-letter code: Neuroligin-2 (836 aa).

An N-terminal signal peptide occupies residues 1–14 (MWLLALCLVGLAGA). Residues 15-678 (QRGGGGPGGG…DSRDYSTELS (664 aa)) are Extracellular-facing. 2 N-linked (GlcNAc...) asparagine glycosylation sites follow: Asn98 and Asn136. 3 disulfides stabilise this stretch: Cys106-Cys141, Cys317-Cys328, and Cys487-Cys521. N-linked (GlcNAc...) asparagine glycosylation occurs at Asn522. The disordered stretch occupies residues 623–661 (PPYATRWPPRTPGPGTSGTRRPPPPATLPPESDIDLGPR). Residues 679–699 (VTVAVGASLLFLNILAFAALY) traverse the membrane as a helical segment. The required for interaction with LHFPL4 stretch occupies residues 679–699 (VTVAVGASLLFLNILAFAALY). At 700-836 (YKRDRRQELR…LPHPHSTTRV (137 aa)) the chain is on the cytoplasmic side. 2 disordered regions span residues 711–735 (RRLSPPGGSGSGVPGGGPLLPTAGR) and 791–836 (LLPS…TTRV). 2 positions are modified to phosphoserine: Ser714 and Ser719. The segment covering 717-728 (GGSGSGVPGGGP) has biased composition (gly residues). A compositionally biased stretch (pro residues) spans 796–819 (LGPPPPPPPPSLHPFGPFPPPPPT). A compositionally biased stretch (polar residues) spans 824–836 (NNTLPHPHSTTRV).

This sequence belongs to the type-B carboxylesterase/lipase family. Interacts with neurexins NRXN1, NRXN2 and NRXN3. Interaction with neurexins is mediated by heparan sulfate glycan modification on neurexin. Interacts (via its C-terminus) with DLG4/PSD-95 (via PDZ domain 3). Interacts with PATJ. Interacts with GPHN. Interacts with MDGA1 and MDGA2. Found in a complex with MAGI2 and IGSF9B, where it interacts with MAGI2 (via WW 1, WW 2 and PDZ 2 domains). Identified in a complex of 720 kDa composed of LHFPL4, NLGN2, GABRA1, GABRB2, GABRG2 and GABRB3. Interacts with LHFPL4; leading to mutual regulation of the protein level and synaptic clustering. Interacts with GABRA1. In terms of tissue distribution, detected on hippocampus neurons, especially at inhibitory synapses. Detected in retina, in the outer and inner plexiform layer. Detected in pancreas, in islet of Langerhans beta cells (at protein level). Expressed in brain, spinal cord and dorsal root ganglion. Detected in brain, and at lower levels in pancreas islet beta cells.

The protein localises to the cell membrane. Its subcellular location is the postsynaptic cell membrane. It localises to the presynaptic cell membrane. Its function is as follows. Transmembrane scaffolding protein involved in cell-cell interactions via its interactions with neurexin family members. Mediates cell-cell interactions both in neurons and in other types of cells, such as Langerhans beta cells. Plays a role in synapse function and synaptic signal transmission, especially via gamma-aminobutyric acid receptors (GABA(A) receptors). Functions by recruiting and clustering synaptic proteins. Promotes clustering of postsynaptic GABRG2 and GPHN. Promotes clustering of postsynaptic LHFPL4. Modulates signaling by inhibitory synapses, and thereby plays a role in controlling the ratio of signaling by excitatory and inhibitory synapses and information processing. Required for normal signal amplitude from inhibitory synapses, but is not essential for normal signal frequency. May promote the initial formation of synapses, but is not essential for this. In vitro, triggers the de novo formation of presynaptic structures. Mediates cell-cell interactions between Langerhans beta cells and modulates insulin secretion. The sequence is that of Neuroligin-2 (Nlgn2) from Rattus norvegicus (Rat).